A 518-amino-acid chain; its full sequence is Glutamate--cysteine ligase (518 aa).

It belongs to the glutamate--cysteine ligase type 1 family. Type 1 subfamily.

It catalyses the reaction L-cysteine + L-glutamate + ATP = gamma-L-glutamyl-L-cysteine + ADP + phosphate + H(+). Its pathway is sulfur metabolism; glutathione biosynthesis; glutathione from L-cysteine and L-glutamate: step 1/2. The protein is Glutamate--cysteine ligase of Salmonella agona (strain SL483).